Consider the following 2616-residue polypeptide: Serine protease ndl (2616 aa).

A signal peptide spans 1–43 (MNYNMDEMEATRLLRHPRRWWSIGFGKRIVAISILVIIVLLFS). 2 positions are modified to phosphoserine: S215 and S220. The WIID 1 repeat unit spans residues 261-269 (ISWIIDGHD). N-linked (GlcNAc...) asparagine glycosylation occurs at N291. The WIID 2 repeat unit spans residues 320-328 (ISWILDHFD). A glycan (N-linked (GlcNAc...) asparagine) is linked at N347. The disordered stretch occupies residues 352-375 (SASSEPIVDTENTNSDHVPTTENG). N-linked (GlcNAc...) asparagine glycosylation is present at N379. A WIID 3 repeat occupies 399–407 (FDWILDGEE). Residue N417 is glycosylated (N-linked (GlcNAc...) asparagine). WIID repeat units lie at residues 446–454 (FDWIIDGRE) and 477–485 (FDWIIDGEE). N-linked (GlcNAc...) asparagine glycosylation is found at N492 and N515. Residues 528–536 (FDWIIDGGE) form a WIID 6 repeat. Low complexity predominate over residues 537 to 547 (SSGEVSTSSTS). Residues 537–574 (SSGEVSTSSTSQPKLTTREAISNPESPRSSHPLDNPTS) form a disordered region. The segment covering 548–565 (QPKLTTREAISNPESPRS) has biased composition (polar residues). Phosphoserine occurs at positions 574 and 581. The N-linked (GlcNAc...) asparagine glycan is linked to N598. O-linked (Xyl...) (glycosaminoglycan) serine glycosylation occurs at S794. Residues 798 to 817 (GQGANIFSKNASPQKPTNGQ) form a disordered region. Polar residues predominate over residues 804-817 (FSKNASPQKPTNGQ). N-linked (GlcNAc...) asparagine glycosylation occurs at N827. S829 carries O-linked (Xyl...) (glycosaminoglycan) serine glycosylation. N-linked (GlcNAc...) asparagine glycosylation is present at N861. LDL-receptor class A domains are found at residues 889-929 (SRCP…ACTC) and 955-1006 (FGCE…QCSM). 3 disulfide bridges follow: C891-C905, C899-C918, and C912-C927. In terms of domain architecture, LDL-receptor class A 2; truncated spans 929 to 956 (CADRVDEERLCDGYEDCPMGEDELGCFG). Cystine bridges form between C957–C982, C964–C995, and C989–C1004. N975 is a glycosylation site (N-linked (GlcNAc...) asparagine). Positions 1031–1033 (RGD) match the Cell attachment site motif. N1064 is a glycosylation site (N-linked (GlcNAc...) asparagine). Residues S1134 and S1136 each carry the phosphoserine modification. Positions 1145–1383 (IVGGSYTSAL…YLDWLEMATT (239 aa)) constitute a Peptidase S1 1 domain. Residues C1170 and C1186 are joined by a disulfide bond. Active-site charge relay system residues include H1185 and D1233. 6 disulfide bridges follow: C1276–C1338, C1305–C1317, C1328–C1359, C1396–C1408, C1401–C1421, and C1415–C1430. S1332 acts as the Charge relay system in catalysis. The 39-residue stretch at 1394-1432 (QLCPGFICVWGGKRCIAKRQRCDRNVDCLGGEDEVGCTY) folds into the LDL-receptor class A 4 domain. Residue N1445 is glycosylated (N-linked (GlcNAc...) asparagine). 2 disordered regions span residues 1530-1557 (FTVS…PSTN) and 1683-1704 (PTTT…HSEK). 2 stretches are compositionally biased toward low complexity: residues 1537–1557 (TSPS…PSTN) and 1683–1700 (PTTT…SSST). Positions 1713 to 1743 (FVCKKMSQIVDIMMRCDRKVDCEDGTDELDC) constitute an LDL-receptor class A 5; truncated domain. 6 disulfides stabilise this stretch: C1728/C1745, C1734/C1764, C1758/C1773, C1776/C1789, C1783/C1802, and C1796/C1811. The region spanning 1745 to 1775 (CKDYLKGSLKGLICDGKADCEDLTDEQNCVE) is the LDL-receptor class A 6; truncated domain. Positions 1774-1813 (VECQSNEFRCPLSKTCLPLSSRCDNKVDCKFKEDEKDCFA) constitute an LDL-receptor class A 7 domain. N-linked (GlcNAc...) asparagine glycosylation is found at N1878, N1956, and N2023. A Peptidase S1 2 domain is found at 2027-2301 (LVNEQLHEAI…LQDIIDKPSC (275 aa)). A disulfide bond links C2055 and C2071. N2144, N2173, N2197, N2237, and N2269 each carry an N-linked (GlcNAc...) asparagine glycan. C2177 and C2230 are oxidised to a cystine. LDL-receptor class A domains are found at residues 2308-2346 (PDCS…KCRQ), 2349-2389 (QQCA…ICSC), and 2419-2459 (CNCT…YCFG). Intrachain disulfides connect C2310–C2320, C2315–C2333, C2327–C2344, C2351–C2364, C2358–C2377, and C2371–C2387. An LDL-receptor class A 10; truncated domain is found at 2387–2419 (CSCFTYLQATDPSKICDGKRNCWDKSDESSVLC). An N-linked (GlcNAc...) asparagine glycan is attached at N2420. 3 cysteine pairs are disulfide-bonded: C2421-C2435, C2428-C2448, and C2442-C2457. N-linked (GlcNAc...) asparagine glycosylation is found at N2556 and N2601.

It belongs to the peptidase S1 family. In terms of processing, requires cleavage for activation (presumably). As to expression, follicle.

Its subcellular location is the secreted. It localises to the extracellular space. The protein resides in the extracellular matrix. In terms of biological role, component of the extracellular signaling pathway that establishes the dorsal-ventral pathway of the embryo. A protease cascade involving ndl, gd, snk and ea results in activation of the spz Toll receptor ligand; acts upstream of gd, snk and ea and is required for proteolytic processing of gd. Activation of ea requires activation of the ndl-gd-snk protease cascade and sulfation of a vitelline membrane component by pip. Localized activation of the Toll receptor in the ventral region of the embryo defines cell identities along the dorsal-ventral continuum. The protein is Serine protease ndl of Drosophila melanogaster (Fruit fly).